Here is a 341-residue protein sequence, read N- to C-terminus: Probable electron transfer flavoprotein subunit alpha, mitochondrial (341 aa).

Leucine 285–aspartate 313 contributes to the FAD binding site.

The protein belongs to the ETF alpha-subunit/FixB family. Heterodimer of an alpha and a beta subunit. FAD is required as a cofactor.

It localises to the mitochondrion matrix. Functionally, the electron transfer flavoprotein serves as a specific electron acceptor for several dehydrogenases, including five acyl-CoA dehydrogenases, glutaryl-CoA and sarcosine dehydrogenase. It transfers the electrons to the main mitochondrial respiratory chain via ETF-ubiquinone oxidoreductase (ETF dehydrogenase). The protein is Probable electron transfer flavoprotein subunit alpha, mitochondrial of Schizosaccharomyces pombe (strain 972 / ATCC 24843) (Fission yeast).